The sequence spans 277 residues: Bifunctional protein FolD (277 aa).

NADP(+)-binding positions include 156–158 (GRS), serine 183, and isoleucine 224.

This sequence belongs to the tetrahydrofolate dehydrogenase/cyclohydrolase family. As to quaternary structure, homodimer.

It carries out the reaction (6R)-5,10-methylene-5,6,7,8-tetrahydrofolate + NADP(+) = (6R)-5,10-methenyltetrahydrofolate + NADPH. The enzyme catalyses (6R)-5,10-methenyltetrahydrofolate + H2O = (6R)-10-formyltetrahydrofolate + H(+). It functions in the pathway one-carbon metabolism; tetrahydrofolate interconversion. In terms of biological role, catalyzes the oxidation of 5,10-methylenetetrahydrofolate to 5,10-methenyltetrahydrofolate and then the hydrolysis of 5,10-methenyltetrahydrofolate to 10-formyltetrahydrofolate. The polypeptide is Bifunctional protein FolD (Kosmotoga olearia (strain ATCC BAA-1733 / DSM 21960 / TBF 19.5.1)).